The primary structure comprises 760 residues: MDPVPVRCLLNSISRYLHLVACQTIRFNPIQTCIGNMVLLLKLLKPLLDEVVDCKIPSDDCLYKGCEDLDSVVNQAREFLEDWSPKLSKLFGVFQCEVLLGKVQTCSLEISRILLQLSQSSPVTSSVQSVERCVQETESFKQEGTLMELMENALRNQKDDITSLDNNHLESIIQMLGLISNQDLLKESITVEKERIRSQASKSEEDMEQTEQLIELVLCIREHMLKTEFLEVAKGISIPPYFRCPLSTELMLDPVIVASGQTFDRTSIKKWLDNGLAVCPRTRQVLTHQELIPNYTVKAMIASWLEANRINLATNSCHQYDGGDASSMANNMGSQDFNRTESFRFSLRSSSLTSRSSLETGNGFEKLKINVSASLCGESQSKDLEIFELLSPGQSYTHSRSESVCSVVSSVDYVPSVTHETESILGNHQSSSEMSPKKNLESSNNVNHEHSAAKTYECSVHDLDDSGTMTTSHTIKLVEDLKSGSNKVKTAAAAEIRHLTINSIENRVHIGRCGAITPLLSLLYSEEKLTQEHAVTALLNLSISELNKAMIVEVGAIEPLVHVLNTGNDRAKENSAASLFSLSVLQVNRERIGQSNAAIQALVNLLGKGTFRGKKDAASALFNLSITHDNKARIVQAKAVKYLVELLDPDLEMVDKAVALLANLSAVGEGRQAIVREGGIPLLVETVDLGSQRGKENAASVLLQLCLNSPKFCTLVLQEGAIPPLVALSQSGTQRAKEKAQQLLSHFRNQRDARMKKGRS.

A coiled-coil region spans residues 146-217 (LMELMENALR…EQTEQLIELV (72 aa)). A U-box domain is found at 237–311 (SIPPYFRCPL…ASWLEANRIN (75 aa)). A compositionally biased stretch (polar residues) spans 424-434 (ILGNHQSSSEM). Residues 424–448 (ILGNHQSSSEMSPKKNLESSNNVNH) are disordered. ARM repeat units lie at residues 504 to 543 (IENR…NLSI), 545 to 584 (ELNK…SLSV), 586 to 626 (QVNR…NLSI), 628 to 666 (HDNK…NLSA), and 668 to 707 (GEGR…QLCL).

It catalyses the reaction S-ubiquitinyl-[E2 ubiquitin-conjugating enzyme]-L-cysteine + [acceptor protein]-L-lysine = [E2 ubiquitin-conjugating enzyme]-L-cysteine + N(6)-ubiquitinyl-[acceptor protein]-L-lysine.. It participates in protein modification; protein ubiquitination. Functions as an E3 ubiquitin ligase. This is U-box domain-containing protein 3 (PUB3) from Arabidopsis thaliana (Mouse-ear cress).